A 40-amino-acid polypeptide reads, in one-letter code: Putative NAD(P)-dependent glyceraldehyde-3-phosphate dehydrogenase PS5 (40 aa).

In Pinus strobus (Eastern white pine), this protein is Putative NAD(P)-dependent glyceraldehyde-3-phosphate dehydrogenase PS5.